A 67-amino-acid polypeptide reads, in one-letter code: Protein AaeX (67 aa).

2 helical membrane-spanning segments follow: residues 3–23 and 43–63; these read LFPVIVVFGLSFPPIFFELLL and FVWHPALFNTALYCCLFYLIS.

The protein belongs to the AaeX family.

It localises to the cell membrane. This chain is Protein AaeX, found in Escherichia coli O1:K1 / APEC.